Reading from the N-terminus, the 94-residue chain is MAFGTDPTPDGLANPPIDDLMKHADSKYALAIFAAKRARQINSYFTQLNEGLLQNIGPLVEYQNNEKPLSIAFREIDEGLLEETLGEDDANEGN.

Belongs to the RNA polymerase subunit omega family. As to quaternary structure, the RNAP catalytic core consists of 2 alpha, 1 beta, 1 beta' and 1 omega subunit. When a sigma factor is associated with the core the holoenzyme is formed, which can initiate transcription.

The enzyme catalyses RNA(n) + a ribonucleoside 5'-triphosphate = RNA(n+1) + diphosphate. Its function is as follows. Promotes RNA polymerase assembly. Latches the N- and C-terminal regions of the beta' subunit thereby facilitating its interaction with the beta and alpha subunits. This is DNA-directed RNA polymerase subunit omega from Bifidobacterium longum (strain DJO10A).